The chain runs to 442 residues: MASKAKTGRDDEATSAVELTEATESAVARTDGDSTTDTASKLGHHSFLSRLYTGTGAFEVVGRRRLWFGVSGAIVAVAIASIVFRGFTFGIDFKGGTTVSFPRGSTQVAQVEDVYYRALGSEPQSVVIVGAGASATVQIRSETLTSDQTAKLRDALFEAFGPKGTDGQPSKQAISDSAVSETWGGQITKKAVIALVVFLVLVALYITVRYERYMTISAITAMLFDLTVTAGVYSLVGFEVTPATVIGLLTILGFSLYDTVIVFDKVEENTHGFQHTTRRTFAEQANLAINQTFMRSINTSLIGVLPVLALMLVAVWLLGVGTLKDLALVQLIGIIIGTYSSIFFATPLLVTLRERTELVRNHTRRVLKRRNSGSPAGSEDASTDGGEQPAAADEQSLVGITQASSQSAPRAAQGSSKPAPGARPVRPVGTRRPTGKRNAGRR.

Positions 1-39 (MASKAKTGRDDEATSAVELTEATESAVARTDGDSTTDTA) are disordered. A run of 6 helical transmembrane segments spans residues 67–87 (WFGV…FRGF), 187–207 (ITKK…LYIT), 218–238 (AITA…LVGF), 243–263 (ATVI…VIVF), 301–321 (LIGV…LGVG), and 331–351 (LIGI…LLVT). The disordered stretch occupies residues 366–442 (VLKRRNSGSP…PTGKRNAGRR (77 aa)). The span at 402-432 (QASSQSAPRAAQGSSKPAPGARPVRPVGTRR) shows a compositional bias: low complexity. Basic residues predominate over residues 433 to 442 (PTGKRNAGRR).

This sequence belongs to the SecD/SecF family. SecF subfamily. Forms a complex with SecD. Part of the essential Sec protein translocation apparatus which comprises SecA, SecYEG and auxiliary proteins SecDF. Other proteins may also be involved.

It is found in the cell membrane. In terms of biological role, part of the Sec protein translocase complex. Interacts with the SecYEG preprotein conducting channel. SecDF uses the proton motive force (PMF) to complete protein translocation after the ATP-dependent function of SecA. The protein is Protein translocase subunit SecF of Mycobacterium tuberculosis (strain CDC 1551 / Oshkosh).